We begin with the raw amino-acid sequence, 244 residues long: Protein-L-isoaspartate O-methyltransferase 2 (244 aa).

Ser-88 is a catalytic residue.

Belongs to the methyltransferase superfamily. L-isoaspartyl/D-aspartyl protein methyltransferase family.

The protein resides in the cytoplasm. It catalyses the reaction [protein]-L-isoaspartate + S-adenosyl-L-methionine = [protein]-L-isoaspartate alpha-methyl ester + S-adenosyl-L-homocysteine. Catalyzes the methyl esterification of L-isoaspartyl residues in peptides and proteins that result from spontaneous decomposition of normal L-aspartyl and L-asparaginyl residues. It plays a role in the repair and/or degradation of damaged proteins. The protein is Protein-L-isoaspartate O-methyltransferase 2 of Shewanella sediminis (strain HAW-EB3).